The sequence spans 201 residues: Holliday junction branch migration complex subunit RuvA (201 aa).

Residues Met1–Leu64 form a domain I region. Residues Ser65 to His143 are domain II. The segment at Ile144–Ser153 is flexible linker. Residues Ser153–Val201 form a domain III region.

This sequence belongs to the RuvA family. In terms of assembly, homotetramer. Forms an RuvA(8)-RuvB(12)-Holliday junction (HJ) complex. HJ DNA is sandwiched between 2 RuvA tetramers; dsDNA enters through RuvA and exits via RuvB. An RuvB hexamer assembles on each DNA strand where it exits the tetramer. Each RuvB hexamer is contacted by two RuvA subunits (via domain III) on 2 adjacent RuvB subunits; this complex drives branch migration. In the full resolvosome a probable DNA-RuvA(4)-RuvB(12)-RuvC(2) complex forms which resolves the HJ.

Its subcellular location is the cytoplasm. Functionally, the RuvA-RuvB-RuvC complex processes Holliday junction (HJ) DNA during genetic recombination and DNA repair, while the RuvA-RuvB complex plays an important role in the rescue of blocked DNA replication forks via replication fork reversal (RFR). RuvA specifically binds to HJ cruciform DNA, conferring on it an open structure. The RuvB hexamer acts as an ATP-dependent pump, pulling dsDNA into and through the RuvAB complex. HJ branch migration allows RuvC to scan DNA until it finds its consensus sequence, where it cleaves and resolves the cruciform DNA. The protein is Holliday junction branch migration complex subunit RuvA of Protochlamydia amoebophila (strain UWE25).